A 296-amino-acid polypeptide reads, in one-letter code: Protoheme IX farnesyltransferase (296 aa).

Topologically, residues 1-9 are cytoplasmic; sequence MMFKQYLQV. Residues 10–28 traverse the membrane as a helical segment; it reads TKPGIIFGNLISVIGGFLL. Residues 29–37 are Periplasmic-facing; the sequence is ASKGSIDYP. Residues 38–56 traverse the membrane as a helical segment; it reads LFIYTLVGVSLVVASGCVF. Residues 57–78 are Cytoplasmic-facing; it reads NNYIDRDIDRKMERTKNRVLVK. Residues 79-97 traverse the membrane as a helical segment; sequence GLISPAVSLVYATLLGIAG. At 98 to 107 the chain is on the periplasmic side; that stretch reads FMLLWFGANP. Residues 108–126 form a helical membrane-spanning segment; the sequence is LACWLGVMGFVVYVGVYSL. The Cytoplasmic segment spans residues 127–197; the sequence is YMKRHSVYGT…YQAANIPVLP (71 aa). The helical transmembrane segment at 198 to 216 threads the bilayer; the sequence is VVKGISVAKNHITLYIIAF. At 217–228 the chain is on the periplasmic side; sequence AVATLMLSLGGY. Residues 229–247 traverse the membrane as a helical segment; the sequence is AGYKYLVVAAAVSVWWLGM. Topologically, residues 248–268 are cytoplasmic; sequence ALRGYKVADDRIWARKLFGFS. Residues 269–287 traverse the membrane as a helical segment; the sequence is IIAITALSVMMSVDFMVPD. Residues 288–296 are Periplasmic-facing; the sequence is SHTLLAAVW.

The protein belongs to the UbiA prenyltransferase family. Protoheme IX farnesyltransferase subfamily.

The protein localises to the cell inner membrane. The enzyme catalyses heme b + (2E,6E)-farnesyl diphosphate + H2O = Fe(II)-heme o + diphosphate. It functions in the pathway porphyrin-containing compound metabolism; heme O biosynthesis; heme O from protoheme: step 1/1. Converts heme B (protoheme IX) to heme O by substitution of the vinyl group on carbon 2 of heme B porphyrin ring with a hydroxyethyl farnesyl side group. The protein is Protoheme IX farnesyltransferase of Shigella flexneri.